Consider the following 314-residue polypeptide: 4-hydroxy-3-methylbut-2-enyl diphosphate reductase (314 aa).

C12 is a binding site for [4Fe-4S] cluster. Positions 41 and 74 each coordinate (2E)-4-hydroxy-3-methylbut-2-enyl diphosphate. The dimethylallyl diphosphate site is built by H41 and H74. Positions 41 and 74 each coordinate isopentenyl diphosphate. C96 is a [4Fe-4S] cluster binding site. H124 is a (2E)-4-hydroxy-3-methylbut-2-enyl diphosphate binding site. H124 contributes to the dimethylallyl diphosphate binding site. H124 is a binding site for isopentenyl diphosphate. Catalysis depends on E126, which acts as the Proton donor. T167 is a (2E)-4-hydroxy-3-methylbut-2-enyl diphosphate binding site. C197 is a binding site for [4Fe-4S] cluster. (2E)-4-hydroxy-3-methylbut-2-enyl diphosphate is bound by residues S225, S226, N227, and S269. The dimethylallyl diphosphate site is built by S225, S226, N227, and S269. The isopentenyl diphosphate site is built by S225, S226, N227, and S269.

This sequence belongs to the IspH family. Requires [4Fe-4S] cluster as cofactor.

The catalysed reaction is isopentenyl diphosphate + 2 oxidized [2Fe-2S]-[ferredoxin] + H2O = (2E)-4-hydroxy-3-methylbut-2-enyl diphosphate + 2 reduced [2Fe-2S]-[ferredoxin] + 2 H(+). The enzyme catalyses dimethylallyl diphosphate + 2 oxidized [2Fe-2S]-[ferredoxin] + H2O = (2E)-4-hydroxy-3-methylbut-2-enyl diphosphate + 2 reduced [2Fe-2S]-[ferredoxin] + 2 H(+). Its pathway is isoprenoid biosynthesis; dimethylallyl diphosphate biosynthesis; dimethylallyl diphosphate from (2E)-4-hydroxy-3-methylbutenyl diphosphate: step 1/1. It functions in the pathway isoprenoid biosynthesis; isopentenyl diphosphate biosynthesis via DXP pathway; isopentenyl diphosphate from 1-deoxy-D-xylulose 5-phosphate: step 6/6. Functionally, catalyzes the conversion of 1-hydroxy-2-methyl-2-(E)-butenyl 4-diphosphate (HMBPP) into a mixture of isopentenyl diphosphate (IPP) and dimethylallyl diphosphate (DMAPP). Acts in the terminal step of the DOXP/MEP pathway for isoprenoid precursor biosynthesis. The chain is 4-hydroxy-3-methylbut-2-enyl diphosphate reductase from Histophilus somni (strain 2336) (Haemophilus somnus).